A 151-amino-acid chain; its full sequence is Ribosome maturation factor RimP (151 aa).

Belongs to the RimP family.

Its subcellular location is the cytoplasm. Required for maturation of 30S ribosomal subunits. The polypeptide is Ribosome maturation factor RimP (Synechocystis sp. (strain ATCC 27184 / PCC 6803 / Kazusa)).